A 458-amino-acid chain; its full sequence is tRNA(Ile)-lysidine synthase (458 aa).

36 to 41 (SGGADS) contacts ATP.

Belongs to the tRNA(Ile)-lysidine synthase family.

It localises to the cytoplasm. It catalyses the reaction cytidine(34) in tRNA(Ile2) + L-lysine + ATP = lysidine(34) in tRNA(Ile2) + AMP + diphosphate + H(+). Functionally, ligates lysine onto the cytidine present at position 34 of the AUA codon-specific tRNA(Ile) that contains the anticodon CAU, in an ATP-dependent manner. Cytidine is converted to lysidine, thus changing the amino acid specificity of the tRNA from methionine to isoleucine. The protein is tRNA(Ile)-lysidine synthase of Protochlamydia amoebophila (strain UWE25).